Reading from the N-terminus, the 183-residue chain is Small ribosomal subunit protein uS4c (183 aa).

The S4 RNA-binding domain maps to 82-143; the sequence is MRLDNILFRL…KQRSKALIQN (62 aa).

The protein belongs to the universal ribosomal protein uS4 family. In terms of assembly, part of the 30S ribosomal subunit. Contacts protein S5. The interaction surface between S4 and S5 is involved in control of translational fidelity.

The protein resides in the plastid. It is found in the chloroplast. One of the primary rRNA binding proteins, it binds directly to 16S rRNA where it nucleates assembly of the body of the 30S subunit. Functionally, with S5 and S12 plays an important role in translational accuracy. This Babiana stricta (Baboon flower) protein is Small ribosomal subunit protein uS4c (rps4).